A 364-amino-acid chain; its full sequence is Protein Bop (364 aa).

Residues Ser-66–Ser-88 form a disordered region. Residues Leu-114 to His-128 carry the BH3 motif. Positions Gln-258 to Phe-364 are disordered. Composition is skewed to pro residues over residues Ala-311 to Pro-322 and Pro-355 to Phe-364.

Interacts (via BH3 domain) with VDAC1. Interacts with pro-survival Bcl-2 family members, BCL2, BCL2L1 isoform Bcl-X(L), MCL1, BCL2A1 and BCL2L2. Interacts with BAX and BAK1. In terms of tissue distribution, ubiquitously expressed.

Its subcellular location is the mitochondrion. Its function is as follows. Could induce apoptosis in a BH3 domain-dependent manner. The direct interaction network of Bcl-2 family members may play a key role in modulation RTL10/BOP intrinsic apoptotic signaling activity. The sequence is that of Protein Bop from Homo sapiens (Human).